The following is a 139-amino-acid chain: Transthyretin-like protein 5 (139 aa).

An N-terminal signal peptide occupies residues 1–15 (MKLIILLCLVASSYA).

Belongs to the nematode transthyretin-like family.

Its subcellular location is the secreted. This is Transthyretin-like protein 5 (ttr-5) from Caenorhabditis elegans.